The primary structure comprises 244 residues: tRNA pseudouridine synthase A (244 aa).

The active-site Nucleophile is the aspartate 52. Tyrosine 111 contacts substrate.

This sequence belongs to the tRNA pseudouridine synthase TruA family. In terms of assembly, homodimer.

It carries out the reaction uridine(38/39/40) in tRNA = pseudouridine(38/39/40) in tRNA. Functionally, formation of pseudouridine at positions 38, 39 and 40 in the anticodon stem and loop of transfer RNAs. The protein is tRNA pseudouridine synthase A of Thermosipho africanus (strain TCF52B).